The primary structure comprises 156 residues: Small ribosomal subunit protein uS7 (156 aa).

The protein belongs to the universal ribosomal protein uS7 family. In terms of assembly, part of the 30S ribosomal subunit. Contacts proteins S9 and S11.

Its function is as follows. One of the primary rRNA binding proteins, it binds directly to 16S rRNA where it nucleates assembly of the head domain of the 30S subunit. Is located at the subunit interface close to the decoding center, probably blocks exit of the E-site tRNA. This Acidithiobacillus ferrooxidans (strain ATCC 53993 / BNL-5-31) (Leptospirillum ferrooxidans (ATCC 53993)) protein is Small ribosomal subunit protein uS7.